We begin with the raw amino-acid sequence, 279 residues long: Large ribosomal subunit protein uL2 (279 aa).

The interval 224 to 279 (AMNPIDHPHGGGEGRTSGGRHPVTPWGKGTKGNRTRKSKASDKLIVRSRHAKKKGR) is disordered. Over residues 269-279 (VRSRHAKKKGR) the composition is skewed to basic residues.

It belongs to the universal ribosomal protein uL2 family. In terms of assembly, part of the 50S ribosomal subunit. Forms a bridge to the 30S subunit in the 70S ribosome.

One of the primary rRNA binding proteins. Required for association of the 30S and 50S subunits to form the 70S ribosome, for tRNA binding and peptide bond formation. It has been suggested to have peptidyltransferase activity; this is somewhat controversial. Makes several contacts with the 16S rRNA in the 70S ribosome. This Cereibacter sphaeroides (strain ATCC 17025 / ATH 2.4.3) (Rhodobacter sphaeroides) protein is Large ribosomal subunit protein uL2.